We begin with the raw amino-acid sequence, 341 residues long: Beta-hexosaminidase (341 aa).

Substrate contacts are provided by residues Asp-61, Arg-69, Arg-134, and 164–165; that span reads KH. His-177 (proton donor/acceptor) is an active-site residue. Asp-249 (nucleophile) is an active-site residue.

It belongs to the glycosyl hydrolase 3 family. NagZ subfamily.

It is found in the cytoplasm. The catalysed reaction is Hydrolysis of terminal non-reducing N-acetyl-D-hexosamine residues in N-acetyl-beta-D-hexosaminides.. Its pathway is cell wall biogenesis; peptidoglycan recycling. Functionally, plays a role in peptidoglycan recycling by cleaving the terminal beta-1,4-linked N-acetylglucosamine (GlcNAc) from peptide-linked peptidoglycan fragments, giving rise to free GlcNAc, anhydro-N-acetylmuramic acid and anhydro-N-acetylmuramic acid-linked peptides. This Shewanella frigidimarina (strain NCIMB 400) protein is Beta-hexosaminidase.